Here is a 205-residue protein sequence, read N- to C-terminus: Recombination protein RecR (205 aa).

Residues 59–74 (CAMCNTFCEGGLCDIC) form a C4-type zinc finger. In terms of domain architecture, Toprim spans 82–177 (RRLMVVHMPA…KVSRLSQGIP (96 aa)).

The protein belongs to the RecR family.

May play a role in DNA repair. It seems to be involved in an RecBC-independent recombinational process of DNA repair. It may act with RecF and RecO. The sequence is that of Recombination protein RecR from Neisseria meningitidis serogroup C (strain 053442).